A 149-amino-acid chain; its full sequence is Nucleoside deoxyribosyltransferase (149 aa).

Glutamate 90 serves as the catalytic Nucleophile.

The protein belongs to the nucleoside deoxyribosyltransferase family.

The enzyme catalyses 2-deoxy-D-ribosyl-base(1) + base(2) = 2-deoxy-D-ribosyl-base(2) + base(1).. It participates in nucleotide metabolism; nucleotide salvage pathway. In terms of biological role, catalyzes the cleavage of the glycosidic bond of 2'-deoxyribonucleosides and the transfer of the deoxyribosyl moiety to an acceptor purine or pyrimidine base. In Lactobacillus johnsonii (strain CNCM I-12250 / La1 / NCC 533), this protein is Nucleoside deoxyribosyltransferase (ntd).